The sequence spans 85 residues: Contulakin-Lt1 (85 aa).

The N-terminal stretch at 1 to 22 is a signal peptide; it reads MRTAYWVMVMMMVGITAPLSEG. Residues 23-60 constitute a propeptide that is removed on maturation; the sequence is RKLNDAIRGLVADYLTPQLLQSLVSAPYPEFQLDDPNL. C65 and C70 are disulfide-bonded. Positions 76–85 are excised as a propeptide; sequence RRRDLKKRNK.

Belongs to the conotoxin C superfamily. In terms of tissue distribution, expressed by the venom duct.

The protein resides in the secreted. Its function is as follows. Acts as an agonist of neurotensin receptors. It binds to human neurotensin type 1 receptor (NTSR1), rat neurotensin types 1 and 2 receptors (NTSR1/NTSR2) and mouse neurotensin type 3 receptor (SORT1). The sequence is that of Contulakin-Lt1 from Conus litteratus (Lettered cone).